A 1465-amino-acid chain; its full sequence is Myomesin-2 (1465 aa).

The segment at 38 to 61 is disordered; it reads ASTQASSQKSLSQRSSSQRASSQT. Residues 41 to 61 show a composition bias toward low complexity; sequence QASSQKSLSQRSSSQRASSQT. Ig-like C2-type domains lie at 154–245 and 266–371; these read PEIL…AAVV and PLSS…AFLF. Fibronectin type-III domains follow at residues 385-480, 513-608, 614-707, 710-812, and 815-912; these read APMD…ALDP, PPTG…AQDV, APGR…VQAA, VPSH…TMPE, and PAYD…ARPG. 3 Ig-like C2-type domains span residues 904 to 1002, 1130 to 1211, and 1345 to 1434; these read PVLV…EELE, PHFA…QDVS, and RLIG…VTVS. Positions 1442–1465 are disordered; sequence IPDMAPPQQAKPKLIPASASAAGQ.

As to quaternary structure, interacts with TTN/titin.

The protein resides in the cytoplasm. It localises to the myofibril. Its subcellular location is the sarcomere. The protein localises to the m line. Functionally, major component of the vertebrate myofibrillar M band. Binds myosin, titin, and light meromyosin. This binding is dose dependent. This Homo sapiens (Human) protein is Myomesin-2 (MYOM2).